The sequence spans 556 residues: Innexin-7 (556 aa).

3 consecutive transmembrane segments (helical) span residues Leu-21 to Ile-41, Phe-127 to Ala-147, and Ala-213 to Leu-233. Asn-267 is a glycosylation site (N-linked (GlcNAc...) asparagine). A helical transmembrane segment spans residues Ile-310 to Phe-330. The disordered stretch occupies residues Asp-431–Trp-556. The span at Val-435 to His-447 shows a compositional bias: polar residues. The span at Arg-452–Val-461 shows a compositional bias: basic and acidic residues. Residues Ser-463–Pro-474 show a composition bias toward polar residues. Residues Lys-500 to Ser-513 show a composition bias toward basic residues. Residues Ser-514–Pro-527 show a composition bias toward low complexity. The segment covering His-539–Trp-556 has biased composition (basic and acidic residues).

It belongs to the pannexin family.

It localises to the cell membrane. The protein resides in the cell junction. Its subcellular location is the gap junction. Structural component of the gap junctions. In Caenorhabditis elegans, this protein is Innexin-7 (inx-7).